We begin with the raw amino-acid sequence, 547 residues long: uncharacterized protein (547 aa).

The protein to B.subtilis RocB.

This is an uncharacterized protein from Bacillus subtilis (strain 168).